The primary structure comprises 273 residues: Phosphatidylglycerol--prolipoprotein diacylglyceryl transferase (273 aa).

Transmembrane regions (helical) follow at residues Ile-18–Gly-38, Leu-47–Ala-67, Ile-89–Ile-109, and Val-116–Gly-136. Arg-137 is an a 1,2-diacyl-sn-glycero-3-phospho-(1'-sn-glycerol) binding site. 3 helical membrane-spanning segments follow: residues Val-178–Ile-198, Gly-207–Met-227, and Leu-238–Tyr-258.

It belongs to the Lgt family.

Its subcellular location is the cell membrane. It carries out the reaction L-cysteinyl-[prolipoprotein] + a 1,2-diacyl-sn-glycero-3-phospho-(1'-sn-glycerol) = an S-1,2-diacyl-sn-glyceryl-L-cysteinyl-[prolipoprotein] + sn-glycerol 1-phosphate + H(+). It participates in protein modification; lipoprotein biosynthesis (diacylglyceryl transfer). Its function is as follows. Catalyzes the transfer of the diacylglyceryl group from phosphatidylglycerol to the sulfhydryl group of the N-terminal cysteine of a prolipoprotein, the first step in the formation of mature lipoproteins. The protein is Phosphatidylglycerol--prolipoprotein diacylglyceryl transferase of Lysinibacillus sphaericus (strain C3-41).